The chain runs to 1138 residues: Nuclear pore complex-interacting protein family member B13 (1138 aa).

The helical transmembrane segment at Val-73–Ser-93 threads the bilayer. Disordered stretches follow at residues Arg-242–Thr-578 and Glu-747–Ser-1138. Residues Gln-252–Leu-263 show a composition bias toward polar residues. The segment covering Pro-349 to Pro-359 has biased composition (pro residues). 10 stretches are compositionally biased toward basic and acidic residues: residues Asp-406–Arg-416, Asp-448–Arg-458, Asp-490–Arg-500, Asp-532–Arg-542, Asp-782–Arg-792, Asp-824–Arg-834, Asp-866–Arg-876, Asp-908–Arg-918, Asp-950–Arg-960, and Asp-992–Arg-1002.

This sequence belongs to the NPIP family.

Its subcellular location is the membrane. The sequence is that of Nuclear pore complex-interacting protein family member B13 from Homo sapiens (Human).